The primary structure comprises 482 residues: tRNA sulfurtransferase (482 aa).

The region spanning 61–165 (EQAIEALACI…GEELFIVSAI (105 aa)) is the THUMP domain. ATP is bound by residues 183-184 (LI), Lys265, Gly287, and Gln296. A disulfide bridge links Cys344 with Cys456. Residues 404–482 (SGDNEVILDI…GFANVKVYRP (79 aa)) form the Rhodanese domain. Cys456 serves as the catalytic Cysteine persulfide intermediate.

It belongs to the ThiI family.

It localises to the cytoplasm. The catalysed reaction is [ThiI sulfur-carrier protein]-S-sulfanyl-L-cysteine + a uridine in tRNA + 2 reduced [2Fe-2S]-[ferredoxin] + ATP + H(+) = [ThiI sulfur-carrier protein]-L-cysteine + a 4-thiouridine in tRNA + 2 oxidized [2Fe-2S]-[ferredoxin] + AMP + diphosphate. The enzyme catalyses [ThiS sulfur-carrier protein]-C-terminal Gly-Gly-AMP + S-sulfanyl-L-cysteinyl-[cysteine desulfurase] + AH2 = [ThiS sulfur-carrier protein]-C-terminal-Gly-aminoethanethioate + L-cysteinyl-[cysteine desulfurase] + A + AMP + 2 H(+). It functions in the pathway cofactor biosynthesis; thiamine diphosphate biosynthesis. Its function is as follows. Catalyzes the ATP-dependent transfer of a sulfur to tRNA to produce 4-thiouridine in position 8 of tRNAs, which functions as a near-UV photosensor. Also catalyzes the transfer of sulfur to the sulfur carrier protein ThiS, forming ThiS-thiocarboxylate. This is a step in the synthesis of thiazole, in the thiamine biosynthesis pathway. The sulfur is donated as persulfide by IscS. The polypeptide is tRNA sulfurtransferase (Aeromonas hydrophila subsp. hydrophila (strain ATCC 7966 / DSM 30187 / BCRC 13018 / CCUG 14551 / JCM 1027 / KCTC 2358 / NCIMB 9240 / NCTC 8049)).